A 97-amino-acid chain; its full sequence is uncharacterized protein (97 aa).

May have a regulatory function. This is an uncharacterized protein from Synechocystis sp. (strain ATCC 27184 / PCC 6803 / Kazusa).